A 144-amino-acid polypeptide reads, in one-letter code: Gastric inhibitory polypeptide (144 aa).

The first 21 residues, 1 to 21, serve as a signal peptide directing secretion; it reads MVALKTCSLLLVLLFLAVGLG. 2 propeptides span residues 22–42 and 87–144; these read EKEEVEFRSHAKFAGPRPRGP and EARA…LRSQ. Residues 94-113 form a disordered region; it reads AGQSQGKEDKEAQESSLPKS.

The protein belongs to the glucagon family.

The protein resides in the secreted. Its function is as follows. Potent stimulator of insulin secretion and relatively poor inhibitor of gastric acid secretion. This chain is Gastric inhibitory polypeptide (Gip), found in Mus musculus (Mouse).